Reading from the N-terminus, the 187-residue chain is Crossover junction endodeoxyribonuclease RuvC (187 aa).

Active-site residues include D7, E67, and D140. Mg(2+) contacts are provided by D7, E67, and D140.

Belongs to the RuvC family. As to quaternary structure, homodimer which binds Holliday junction (HJ) DNA. The HJ becomes 2-fold symmetrical on binding to RuvC with unstacked arms; it has a different conformation from HJ DNA in complex with RuvA. In the full resolvosome a probable DNA-RuvA(4)-RuvB(12)-RuvC(2) complex forms which resolves the HJ. It depends on Mg(2+) as a cofactor.

It is found in the cytoplasm. The catalysed reaction is Endonucleolytic cleavage at a junction such as a reciprocal single-stranded crossover between two homologous DNA duplexes (Holliday junction).. In terms of biological role, the RuvA-RuvB-RuvC complex processes Holliday junction (HJ) DNA during genetic recombination and DNA repair. Endonuclease that resolves HJ intermediates. Cleaves cruciform DNA by making single-stranded nicks across the HJ at symmetrical positions within the homologous arms, yielding a 5'-phosphate and a 3'-hydroxyl group; requires a central core of homology in the junction. The consensus cleavage sequence is 5'-(A/T)TT(C/G)-3'. Cleavage occurs on the 3'-side of the TT dinucleotide at the point of strand exchange. HJ branch migration catalyzed by RuvA-RuvB allows RuvC to scan DNA until it finds its consensus sequence, where it cleaves and resolves the cruciform DNA. This chain is Crossover junction endodeoxyribonuclease RuvC, found in Chlorobium phaeobacteroides (strain DSM 266 / SMG 266 / 2430).